Consider the following 122-residue polypeptide: Large ribosomal subunit protein uL14 (122 aa).

Belongs to the universal ribosomal protein uL14 family. In terms of assembly, part of the 50S ribosomal subunit. Forms a cluster with proteins L3 and L19. In the 70S ribosome, L14 and L19 interact and together make contacts with the 16S rRNA in bridges B5 and B8.

In terms of biological role, binds to 23S rRNA. Forms part of two intersubunit bridges in the 70S ribosome. The protein is Large ribosomal subunit protein uL14 of Thermobifida fusca (strain YX).